We begin with the raw amino-acid sequence, 227 residues long: Cytochrome c oxidase subunit 2 (227 aa).

The Mitochondrial intermembrane portion of the chain corresponds to 1 to 14 (MAHAAQVGLQDATS). The helical transmembrane segment at 15–45 (PIMEELITFHDHALMIIFLICFLVLYALFLT) threads the bilayer. The Mitochondrial matrix portion of the chain corresponds to 46-59 (LTTKLTSTNISDAQ). Residues 60–87 (EMETIWTILPAIILVLIALPSLRILYMT) form a helical membrane-spanning segment. At 88-227 (DEINDPSFTI…IFEMGPVFAL (140 aa)) the chain is on the mitochondrial intermembrane side. The Cu cation site is built by His-161, Cys-196, Glu-198, Cys-200, His-204, and Met-207. A Mg(2+)-binding site is contributed by Glu-198.

The protein belongs to the cytochrome c oxidase subunit 2 family. Component of the cytochrome c oxidase (complex IV, CIV), a multisubunit enzyme composed of 14 subunits. The complex is composed of a catalytic core of 3 subunits MT-CO1, MT-CO2 and MT-CO3, encoded in the mitochondrial DNA, and 11 supernumerary subunits COX4I, COX5A, COX5B, COX6A, COX6B, COX6C, COX7A, COX7B, COX7C, COX8 and NDUFA4, which are encoded in the nuclear genome. The complex exists as a monomer or a dimer and forms supercomplexes (SCs) in the inner mitochondrial membrane with NADH-ubiquinone oxidoreductase (complex I, CI) and ubiquinol-cytochrome c oxidoreductase (cytochrome b-c1 complex, complex III, CIII), resulting in different assemblies (supercomplex SCI(1)III(2)IV(1) and megacomplex MCI(2)III(2)IV(2)). Found in a complex with TMEM177, COA6, COX18, COX20, SCO1 and SCO2. Interacts with TMEM177 in a COX20-dependent manner. Interacts with COX20. Interacts with COX16. Requires Cu cation as cofactor.

It localises to the mitochondrion inner membrane. The enzyme catalyses 4 Fe(II)-[cytochrome c] + O2 + 8 H(+)(in) = 4 Fe(III)-[cytochrome c] + 2 H2O + 4 H(+)(out). Functionally, component of the cytochrome c oxidase, the last enzyme in the mitochondrial electron transport chain which drives oxidative phosphorylation. The respiratory chain contains 3 multisubunit complexes succinate dehydrogenase (complex II, CII), ubiquinol-cytochrome c oxidoreductase (cytochrome b-c1 complex, complex III, CIII) and cytochrome c oxidase (complex IV, CIV), that cooperate to transfer electrons derived from NADH and succinate to molecular oxygen, creating an electrochemical gradient over the inner membrane that drives transmembrane transport and the ATP synthase. Cytochrome c oxidase is the component of the respiratory chain that catalyzes the reduction of oxygen to water. Electrons originating from reduced cytochrome c in the intermembrane space (IMS) are transferred via the dinuclear copper A center (CU(A)) of subunit 2 and heme A of subunit 1 to the active site in subunit 1, a binuclear center (BNC) formed by heme A3 and copper B (CU(B)). The BNC reduces molecular oxygen to 2 water molecules using 4 electrons from cytochrome c in the IMS and 4 protons from the mitochondrial matrix. The polypeptide is Cytochrome c oxidase subunit 2 (MT-CO2) (Gorilla gorilla gorilla (Western lowland gorilla)).